The primary structure comprises 231 residues: Cytochrome c oxidase subunit 2 (231 aa).

Topologically, residues 1 to 14 are mitochondrial intermembrane; the sequence is MAHPVHVGLKEATS. A helical membrane pass occupies residues 15–45; the sequence is PFMEELIAFHDHTLMIIFLISSLVLYIISMM. Over 46–59 the chain is Mitochondrial matrix; it reads LTTKLTHTSTMNAQ. The chain crosses the membrane as a helical span at residues 60–87; the sequence is EIEIIWTILPAIILIMIALPSLRILYMT. Residues 88-231 lie on the Mitochondrial intermembrane side of the membrane; that stretch reads DEFNKPYLTL…WASYLYIVSL (144 aa). The Cu cation site is built by His161, Cys196, Glu198, Cys200, His204, and Met207. Residue Glu198 coordinates Mg(2+).

It belongs to the cytochrome c oxidase subunit 2 family. In terms of assembly, component of the cytochrome c oxidase (complex IV, CIV), a multisubunit enzyme composed of 14 subunits. The complex is composed of a catalytic core of 3 subunits MT-CO1, MT-CO2 and MT-CO3, encoded in the mitochondrial DNA, and 11 supernumerary subunits COX4I, COX5A, COX5B, COX6A, COX6B, COX6C, COX7A, COX7B, COX7C, COX8 and NDUFA4, which are encoded in the nuclear genome. The complex exists as a monomer or a dimer and forms supercomplexes (SCs) in the inner mitochondrial membrane with NADH-ubiquinone oxidoreductase (complex I, CI) and ubiquinol-cytochrome c oxidoreductase (cytochrome b-c1 complex, complex III, CIII), resulting in different assemblies (supercomplex SCI(1)III(2)IV(1) and megacomplex MCI(2)III(2)IV(2)). Found in a complex with TMEM177, COA6, COX18, COX20, SCO1 and SCO2. Interacts with TMEM177 in a COX20-dependent manner. Interacts with COX20. Interacts with COX16. Cu cation is required as a cofactor.

It is found in the mitochondrion inner membrane. The catalysed reaction is 4 Fe(II)-[cytochrome c] + O2 + 8 H(+)(in) = 4 Fe(III)-[cytochrome c] + 2 H2O + 4 H(+)(out). Its function is as follows. Component of the cytochrome c oxidase, the last enzyme in the mitochondrial electron transport chain which drives oxidative phosphorylation. The respiratory chain contains 3 multisubunit complexes succinate dehydrogenase (complex II, CII), ubiquinol-cytochrome c oxidoreductase (cytochrome b-c1 complex, complex III, CIII) and cytochrome c oxidase (complex IV, CIV), that cooperate to transfer electrons derived from NADH and succinate to molecular oxygen, creating an electrochemical gradient over the inner membrane that drives transmembrane transport and the ATP synthase. Cytochrome c oxidase is the component of the respiratory chain that catalyzes the reduction of oxygen to water. Electrons originating from reduced cytochrome c in the intermembrane space (IMS) are transferred via the dinuclear copper A center (CU(A)) of subunit 2 and heme A of subunit 1 to the active site in subunit 1, a binuclear center (BNC) formed by heme A3 and copper B (CU(B)). The BNC reduces molecular oxygen to 2 water molecules using 4 electrons from cytochrome c in the IMS and 4 protons from the mitochondrial matrix. The sequence is that of Cytochrome c oxidase subunit 2 (MT-CO2) from Brachyteles hypoxanthus (Northern muriqui).